The primary structure comprises 380 residues: Cytochrome b (380 aa).

4 helical membrane-spanning segments follow: residues 34–54 (FGSL…LLAM), 78–99 (WLIR…FLHI), 114–134 (WNTG…GYVL), and 179–199 (FFAL…IHLT). The heme b site is built by His-84 and His-98. The heme b site is built by His-183 and His-197. His-202 contacts a ubiquinone. 4 helical membrane-spanning segments follow: residues 227–247 (IKDI…TLFS), 289–309 (LGGV…PFLH), 321–341 (LSQT…WIGS), and 348–368 (FIII…ILFP).

Belongs to the cytochrome b family. The cytochrome bc1 complex contains 11 subunits: 3 respiratory subunits (MT-CYB, CYC1 and UQCRFS1), 2 core proteins (UQCRC1 and UQCRC2) and 6 low-molecular weight proteins (UQCRH/QCR6, UQCRB/QCR7, UQCRQ/QCR8, UQCR10/QCR9, UQCR11/QCR10 and a cleavage product of UQCRFS1). This cytochrome bc1 complex then forms a dimer. It depends on heme b as a cofactor.

The protein resides in the mitochondrion inner membrane. Its function is as follows. Component of the ubiquinol-cytochrome c reductase complex (complex III or cytochrome b-c1 complex) that is part of the mitochondrial respiratory chain. The b-c1 complex mediates electron transfer from ubiquinol to cytochrome c. Contributes to the generation of a proton gradient across the mitochondrial membrane that is then used for ATP synthesis. This chain is Cytochrome b (MT-CYB), found in Alectoris graeca (Rock partridge).